The chain runs to 176 residues: Large ribosomal subunit protein eL6 (176 aa).

Residues 1–27 (MSQVAPKWYQSEDVPAPKQTRKTARPQ) are disordered.

The protein belongs to the eukaryotic ribosomal protein eL6 family. As to quaternary structure, component of the large ribosomal subunit. Mature ribosomes consist of a small (40S) and a large (60S) subunit. The 40S subunit contains about 32 different proteins and 1 molecule of RNA (18S). The 60S subunit contains 45 different proteins and 3 molecules of RNA (25S, 5.8S and 5S).

Its subcellular location is the cytoplasm. Functionally, component of the ribosome, a large ribonucleoprotein complex responsible for the synthesis of proteins in the cell. The small ribosomal subunit (SSU) binds messenger RNAs (mRNAs) and translates the encoded message by selecting cognate aminoacyl-transfer RNA (tRNA) molecules. The large subunit (LSU) contains the ribosomal catalytic site termed the peptidyl transferase center (PTC), which catalyzes the formation of peptide bonds, thereby polymerizing the amino acids delivered by tRNAs into a polypeptide chain. The nascent polypeptides leave the ribosome through a tunnel in the LSU and interact with protein factors that function in enzymatic processing, targeting, and the membrane insertion of nascent chains at the exit of the ribosomal tunnel. This chain is Large ribosomal subunit protein eL6, found in Candida albicans (strain SC5314 / ATCC MYA-2876) (Yeast).